The chain runs to 613 residues: DNA mismatch repair protein MutL (613 aa).

Belongs to the DNA mismatch repair MutL/HexB family.

This protein is involved in the repair of mismatches in DNA. It is required for dam-dependent methyl-directed DNA mismatch repair. May act as a 'molecular matchmaker', a protein that promotes the formation of a stable complex between two or more DNA-binding proteins in an ATP-dependent manner without itself being part of a final effector complex. The polypeptide is DNA mismatch repair protein MutL (Bradyrhizobium sp. (strain ORS 278)).